A 1218-amino-acid chain; its full sequence is Cytosolic carboxypeptidase 1 (1218 aa).

2 disordered regions span residues 476–512 and 590–617; these read VVMK…RVAP and TEDD…PTLH. Over residues 477–499 the composition is skewed to basic and acidic residues; it reads VMKERASPKGEEAKEDPKGHDRT. The region spanning 840-1130 is the Peptidase M14 domain; sequence YPYTYSTLQM…KFCVGLLRLK (291 aa). Residues His912, Glu915, and His1009 each contribute to the Zn(2+) site. Glu1094 serves as the catalytic Proton donor/acceptor. Phosphoserine is present on Ser1160. Positions 1193 to 1218 are disordered; that stretch reads ENTGDYEPSAQEEALSDSEVSRTHLI.

Belongs to the peptidase M14 family. In terms of assembly, interacts with MYLK. It depends on Zn(2+) as a cofactor. Widely expressed. Highly expressed in the cerebellum and cortex of adult mouse brain. Expressed at similar levels in both the cerebellum and the cortex throughout all developmental stages. Also expressed in sciatic nerve transection, spinal motor neurons undergoing axon regeneration, testis, heart, eye, lung, pancreas, intestine, stomach, pituitary, spleen, adrenal, kidney and in developing brain. Expression in cranial motor nuclei is the same as that observed in uninjured primary motor neurons. Expression is prevalent in sensory neurons and hippocampal CA3 neurons in addition to regenerating motor neurons.

The protein resides in the cytoplasm. Its subcellular location is the cytosol. It localises to the nucleus. The protein localises to the mitochondrion. It catalyses the reaction (L-glutamyl)(n+1)-gamma-L-glutamyl-L-glutamyl-[protein] + H2O = (L-glutamyl)(n)-gamma-L-glutamyl-L-glutamyl-[protein] + L-glutamate. The catalysed reaction is C-terminal L-alpha-aminoacyl-L-glutamyl-L-glutamyl-[tubulin] + H2O = C-terminal L-alpha-aminoacyl-L-glutamyl-[tubulin] + L-glutamate. Metallocarboxypeptidase that mediates protein deglutamylation of tubulin and non-tubulin target proteins. Catalyzes the removal of polyglutamate side chains present on the gamma-carboxyl group of glutamate residues within the C-terminal tail of alpha- and beta-tubulin. Specifically cleaves tubulin long-side-chains, while it is not able to remove the branching point glutamate. Also catalyzes the removal of polyglutamate residues from the carboxy-terminus of alpha-tubulin as well as non-tubulin proteins such as MYLK. Involved in KLF4 deglutamylation which promotes KLF4 proteasome-mediated degradation, thereby negatively regulating cell pluripotency maintenance and embryogenesis. This chain is Cytosolic carboxypeptidase 1, found in Mus musculus (Mouse).